The chain runs to 2170 residues: Brefeldin A-inhibited guanine nucleotide-exchange protein 3 (2170 aa).

Serine 471 carries the phosphoserine modification. Disordered regions lie at residues 489 to 547 (EHTP…MGKV) and 613 to 634 (AAEKDSGRSDVSDIGSDNCSLA). Over residues 503–524 (ISISVTTDTGQTTLEGELGQTT) the composition is skewed to polar residues. The SEC7 domain occupies 579–792 (RTRSYGSRYS…EELYHQVLDR (214 aa)). The segment covering 614–623 (AEKDSGRSDV) has biased composition (basic and acidic residues). A phosphoserine mark is found at serine 628, serine 632, and serine 1045. Residues 1488–1508 (PGFGIYAVVHLLLPVMSLWLL) traverse the membrane as a helical segment. The tract at residues 1843–1872 (SSDSSQQCSSEDEDIFEETAQVSPPRGKEK) is disordered. Residue serine 1881 is modified to Phosphoserine. Residues 1938–1955 (FQSESSTPSTGGFSGKNT) are compositionally biased toward polar residues. Disordered regions lie at residues 1938–1997 (FQSE…RKKE) and 2024–2058 (KRRQPHNLPPFPKEVKVDKKGEPLGPRGPDSPLLQ). A compositionally biased stretch (basic and acidic residues) spans 1956-1966 (PSEDDRREHLS). Phosphoserine is present on residues serine 1975 and serine 1984. 2 stretches are compositionally biased toward basic and acidic residues: residues 1986 to 1997 (KTEKKDPGRKKE) and 2036 to 2045 (KEVKVDKKGE). A phosphoserine mark is found at serine 2072, serine 2074, serine 2088, serine 2094, and serine 2096. The interval 2078–2097 (ELLRQEKRPRSGSTGSSLSV) is disordered. The span at 2088 to 2097 (SGSTGSSLSV) shows a compositional bias: low complexity.

As to quaternary structure, interacts with PHB2. As to expression, expressed in pancreatic islet (insulin granules of islet alpha and beta cells) and brain (at protein level).

The protein resides in the cytoplasmic vesicle. It localises to the secretory vesicle. The protein localises to the secretory vesicle membrane. Functionally, participates in the regulation of systemic glucose homeostasis, where it negatively regulates insulin granule biogenesis in pancreatic islet beta cells. Also regulates glucagon granule production in pancreatic alpha cells. Inhibits nuclear translocation of the transcriptional coregulator PHB2 and may enhance estrogen receptor alpha (ESR1) transcriptional activity in breast cancer cells. The chain is Brefeldin A-inhibited guanine nucleotide-exchange protein 3 from Mus musculus (Mouse).